A 288-amino-acid chain; its full sequence is Phenazine biosynthesis-like domain-containing protein (288 aa).

Glu46 is a catalytic residue.

Belongs to the PhzF family. In terms of assembly, interacts with UNRIP/MAWD.

This is Phenazine biosynthesis-like domain-containing protein (PBLD) from Bos taurus (Bovine).